Consider the following 76-residue polypeptide: UPF0291 protein BT9727_1737 (76 aa).

This sequence belongs to the UPF0291 family.

Its subcellular location is the cytoplasm. This chain is UPF0291 protein BT9727_1737, found in Bacillus thuringiensis subsp. konkukian (strain 97-27).